Here is a 108-residue protein sequence, read N- to C-terminus: Insulin-1 (108 aa).

The signal sequence occupies residues 1 to 24; the sequence is MALLVHFLPLLALLALWEPKPTQA. 3 disulfide bridges follow: cysteine 31-cysteine 94, cysteine 43-cysteine 107, and cysteine 93-cysteine 98. Positions 57–85 are cleaved as a propeptide — c peptide; it reads EVEDPQVEQLELGGSPGDLQTLALEVARQ.

It belongs to the insulin family. Heterodimer of a B chain and an A chain linked by two disulfide bonds.

Its subcellular location is the secreted. Its function is as follows. Insulin decreases blood glucose concentration. It increases cell permeability to monosaccharides, amino acids and fatty acids. It accelerates glycolysis, the pentose phosphate cycle, and glycogen synthesis in liver. This chain is Insulin-1 (Ins1), found in Mus musculus (Mouse).